The sequence spans 269 residues: Mitochondrial genome maintenance protein MGM101 (269 aa).

A mitochondrion-targeting transit peptide spans 1 to 30 (MKSIFKVRGCVSHAAQFCQKRTVVSTGTSN).

It belongs to the MGM101 family.

It is found in the mitochondrion matrix. The protein localises to the mitochondrion nucleoid. In terms of biological role, performs an essential function in the repair of oxidatively damaged mtDNA that is required for the maintenance of the mitochondrial genome. Binds to DNA. This Saccharomyces cerevisiae (strain ATCC 204508 / S288c) (Baker's yeast) protein is Mitochondrial genome maintenance protein MGM101 (MGM101).